Consider the following 1000-residue polypeptide: Vacuolar protein-sorting protein bro1 (1000 aa).

The BRO1 domain occupies Pro5–Met406. Residues Tyr732 to Glu793 adopt a coiled-coil conformation. 2 disordered regions span residues Leu760–Gln857 and Pro891–Lys1000. A compositionally biased stretch (basic and acidic residues) spans Ile764–Thr792. The segment covering Val840 to Ser849 has biased composition (polar residues). Pro residues-rich tracts occupy residues Ser898–Pro922 and Tyr931–Ser954. Over residues Thr981–Asp991 the composition is skewed to polar residues.

Belongs to the BRO1 family.

The protein resides in the cytoplasm. Its subcellular location is the endosome. Its function is as follows. Involved in concentration and sorting of cargo proteins of the multivesicular body (MVB) for incorporation into intralumenal vesicles. The polypeptide is Vacuolar protein-sorting protein bro1 (broA) (Emericella nidulans (strain FGSC A4 / ATCC 38163 / CBS 112.46 / NRRL 194 / M139) (Aspergillus nidulans)).